Reading from the N-terminus, the 267-residue chain is Small ribosomal subunit protein uS2 (267 aa).

The interval 247-267 (LEDDILEDVEDEEEGDPEQGE) is disordered.

This sequence belongs to the universal ribosomal protein uS2 family.

This Synechococcus sp. (strain JA-3-3Ab) (Cyanobacteria bacterium Yellowstone A-Prime) protein is Small ribosomal subunit protein uS2.